Reading from the N-terminus, the 273-residue chain is MTKLIIHLVSDSSVQTAKYTANSALAQFTSVKPKLYHWPMIRNLELLNEVLSKIEYKHGIVLYTIADQELRKTLTKFCYELKIPCISVIGKIIKEMSVFSGIEIEKEQNYNYKFDKTYFDTLNAIDYAIRHDDGQMLNELLEADIILIGPSRTSKTPTSVFLAYNGLKAANIPYVYNCPFPDFIEKDIDQLVVGLVINPNRLIEIREARLNLLQINENKSYTDFNIVQKECLEVRKICDQRNWPVIDVSTRSIEETAALIMRIYYNRKNKYNK.

Gly-149 to Thr-156 lines the ADP pocket.

It belongs to the pyruvate, phosphate/water dikinase regulatory protein family. PDRP subfamily.

The enzyme catalyses N(tele)-phospho-L-histidyl/L-threonyl-[pyruvate, phosphate dikinase] + ADP = N(tele)-phospho-L-histidyl/O-phospho-L-threonyl-[pyruvate, phosphate dikinase] + AMP + H(+). It catalyses the reaction N(tele)-phospho-L-histidyl/O-phospho-L-threonyl-[pyruvate, phosphate dikinase] + phosphate + H(+) = N(tele)-phospho-L-histidyl/L-threonyl-[pyruvate, phosphate dikinase] + diphosphate. Functionally, bifunctional serine/threonine kinase and phosphorylase involved in the regulation of the pyruvate, phosphate dikinase (PPDK) by catalyzing its phosphorylation/dephosphorylation. The protein is Putative pyruvate, phosphate dikinase regulatory protein of Rickettsia africae (strain ESF-5).